The chain runs to 406 residues: Succinylornithine transaminase (406 aa).

Lys-252 carries the post-translational modification N6-(pyridoxal phosphate)lysine.

The protein belongs to the class-III pyridoxal-phosphate-dependent aminotransferase family. AstC subfamily. Pyridoxal 5'-phosphate is required as a cofactor.

It catalyses the reaction N(2)-succinyl-L-ornithine + 2-oxoglutarate = N-succinyl-L-glutamate 5-semialdehyde + L-glutamate. It participates in amino-acid degradation; L-arginine degradation via AST pathway; L-glutamate and succinate from L-arginine: step 3/5. In terms of biological role, catalyzes the transamination of N(2)-succinylornithine and alpha-ketoglutarate into N(2)-succinylglutamate semialdehyde and glutamate. Can also act as an acetylornithine aminotransferase. This Citrobacter koseri (strain ATCC BAA-895 / CDC 4225-83 / SGSC4696) protein is Succinylornithine transaminase.